A 288-amino-acid polypeptide reads, in one-letter code: Nucleotide-binding protein ASA_0318 (288 aa).

Residue 8–15 (GRSGSGKT) participates in ATP binding. GTP is bound at residue 56 to 59 (DVRN).

This sequence belongs to the RapZ-like family.

Displays ATPase and GTPase activities. This is Nucleotide-binding protein ASA_0318 from Aeromonas salmonicida (strain A449).